The sequence spans 308 residues: Methionyl-tRNA formyltransferase (308 aa).

(6S)-5,6,7,8-tetrahydrofolate is bound at residue 110-113; it reads SLLP.

Belongs to the Fmt family.

The enzyme catalyses L-methionyl-tRNA(fMet) + (6R)-10-formyltetrahydrofolate = N-formyl-L-methionyl-tRNA(fMet) + (6S)-5,6,7,8-tetrahydrofolate + H(+). Functionally, attaches a formyl group to the free amino group of methionyl-tRNA(fMet). The formyl group appears to play a dual role in the initiator identity of N-formylmethionyl-tRNA by promoting its recognition by IF2 and preventing the misappropriation of this tRNA by the elongation apparatus. This is Methionyl-tRNA formyltransferase from Neisseria meningitidis serogroup C (strain 053442).